We begin with the raw amino-acid sequence, 182 residues long: Large ribosomal subunit protein eL15 (182 aa).

The protein belongs to the eukaryotic ribosomal protein eL15 family.

The protein is Large ribosomal subunit protein eL15 (rpl15e) of Methanothermobacter thermautotrophicus (strain ATCC 29096 / DSM 1053 / JCM 10044 / NBRC 100330 / Delta H) (Methanobacterium thermoautotrophicum).